A 497-amino-acid polypeptide reads, in one-letter code: Probable cytosol aminopeptidase (497 aa).

Positions 264 and 269 each coordinate Mn(2+). Lys-276 is a catalytic residue. Residues Asp-287, Asp-347, and Glu-349 each coordinate Mn(2+). Residue Arg-351 is part of the active site.

The protein belongs to the peptidase M17 family. Mn(2+) serves as cofactor.

It is found in the cytoplasm. The enzyme catalyses Release of an N-terminal amino acid, Xaa-|-Yaa-, in which Xaa is preferably Leu, but may be other amino acids including Pro although not Arg or Lys, and Yaa may be Pro. Amino acid amides and methyl esters are also readily hydrolyzed, but rates on arylamides are exceedingly low.. The catalysed reaction is Release of an N-terminal amino acid, preferentially leucine, but not glutamic or aspartic acids.. Presumably involved in the processing and regular turnover of intracellular proteins. Catalyzes the removal of unsubstituted N-terminal amino acids from various peptides. The polypeptide is Probable cytosol aminopeptidase (Thermosynechococcus vestitus (strain NIES-2133 / IAM M-273 / BP-1)).